The chain runs to 595 residues: uncharacterized protein (595 aa).

The disordered stretch occupies residues 112-180; the sequence is VRPPGYDPES…KDVFGRALPT (69 aa). Composition is skewed to basic and acidic residues over residues 120–133 and 161–174; these read ESAKAAEYKDEKHK and RTQERKKPRPKDVF. The CCHC-type; degenerate zinc-finger motif lies at 211–228; that stretch reads VKCLRCGNFGHQSGDRDC. Disordered regions lie at residues 254–290 and 310–595; these read HTDPSEPLKWELKQKPGLSPPRGGFDPDDPNQQIVAE and KSMS…RRRN. The span at 256-267 shows a compositional bias: basic and acidic residues; sequence DPSEPLKWELKQ. Composition is skewed to basic residues over residues 316–331 and 351–364; these read KKRKSKKNKRHKKHSS and RGSKKRKKLKKKSK. Basic and acidic residues-rich tracts occupy residues 414–428, 470–539, and 547–565; these read HYYDEKHQKRKEIVD, VSEK…HVYE, and FSDRYRSTKKTESDSESNR. The span at 584–595 shows a compositional bias: basic residues; sequence RKHRYSTNRRRN.

This is an uncharacterized protein from Arabidopsis thaliana (Mouse-ear cress).